A 438-amino-acid polypeptide reads, in one-letter code: GTPase Der (438 aa).

EngA-type G domains lie at 3-168 (PLIA…PCPE) and 179-354 (IKLA…INRR). GTP-binding positions include 9-16 (GRPNVGKS), 56-60 (DTGGY), 120-123 (NKVD), 185-192 (GRPNVGKS), 232-236 (DTAGL), and 297-300 (NKWD). A KH-like domain is found at 355 to 438 (QKISTSNLNR…LPITMRFLRK (84 aa)).

Belongs to the TRAFAC class TrmE-Era-EngA-EngB-Septin-like GTPase superfamily. EngA (Der) GTPase family. As to quaternary structure, associates with the 50S ribosomal subunit.

GTPase that plays an essential role in the late steps of ribosome biogenesis. The chain is GTPase Der from Chlorobaculum parvum (strain DSM 263 / NCIMB 8327) (Chlorobium vibrioforme subsp. thiosulfatophilum).